A 179-amino-acid chain; its full sequence is MSRIGKKPISLPAGVEVSIKDNAISVKGPKGVLEWALPEGITVVQEGNELVVKRPSDIKQHRAMHGLSRALIANMVQGVSAGFEKKLELVGVGYRAQMQGKKLVISIGFSHPVEVEPPEGIEFEVPAVTRITVKGIDKQLVGNTAAHIRAIRKPEPYKGKGIKYENEVIRRKAGKAGGK.

Belongs to the universal ribosomal protein uL6 family. As to quaternary structure, part of the 50S ribosomal subunit.

In terms of biological role, this protein binds to the 23S rRNA, and is important in its secondary structure. It is located near the subunit interface in the base of the L7/L12 stalk, and near the tRNA binding site of the peptidyltransferase center. In Syntrophomonas wolfei subsp. wolfei (strain DSM 2245B / Goettingen), this protein is Large ribosomal subunit protein uL6.